Here is a 154-residue protein sequence, read N- to C-terminus: MADRLTQLQDTVNQQAEHFCNSIGILQQCSVPSKFAGFERTGSQTPQQQVHQQQQLPQQQQQQQQPQQQEDFPQLFSTLISRCAKDIDTLIESLPSEESSIELQVQSLQRLEAENKESAEKLEEIVRKGELLLEKIQAALSDIAQSQLDMQYSS.

Positions 37 to 71 (GFERTGSQTPQQQVHQQQQLPQQQQQQQQPQQQED) are disordered. Low complexity predominate over residues 44–71 (QTPQQQVHQQQQLPQQQQQQQQPQQQED). Positions 96–140 (SEESSIELQVQSLQRLEAENKESAEKLEEIVRKGELLLEKIQAAL) form a coiled coil.

It belongs to the Mediator complex subunit 21 family. As to quaternary structure, component of the Mediator complex.

It localises to the nucleus. In terms of biological role, component of the Mediator complex, a coactivator involved in the regulated transcription of nearly all RNA polymerase II-dependent genes. Mediator functions as a bridge to convey information from gene-specific regulatory proteins to the basal RNA polymerase II transcription machinery. Mediator is recruited to promoters by direct interactions with regulatory proteins and serves as a scaffold for the assembly of a functional preinitiation complex with RNA polymerase II and the general transcription factors. The chain is Mediator of RNA polymerase II transcription subunit 21 (MED21) from Anopheles gambiae (African malaria mosquito).